Consider the following 1363-residue polypeptide: DNA-directed RNA polymerase subunit beta (1363 aa).

Belongs to the RNA polymerase beta chain family. As to quaternary structure, the RNAP catalytic core consists of 2 alpha, 1 beta, 1 beta' and 1 omega subunit. When a sigma factor is associated with the core the holoenzyme is formed, which can initiate transcription.

The catalysed reaction is RNA(n) + a ribonucleoside 5'-triphosphate = RNA(n+1) + diphosphate. DNA-dependent RNA polymerase catalyzes the transcription of DNA into RNA using the four ribonucleoside triphosphates as substrates. The polypeptide is DNA-directed RNA polymerase subunit beta (Neorickettsia risticii (Ehrlichia risticii)).